Here is a 137-residue protein sequence, read N- to C-terminus: Small ribosomal subunit protein uS9 (137 aa).

A disordered region spans residues 118–137 (KERKKYGLRKARKAPQYSKR).

The protein belongs to the universal ribosomal protein uS9 family.

This chain is Small ribosomal subunit protein uS9, found in Acaryochloris marina (strain MBIC 11017).